Here is a 576-residue protein sequence, read N- to C-terminus: Cyclic nucleotide-binding domain-containing protein 2 (576 aa).

Residue 116–239 (SYRNYAEPLQ…DAQYRFEFFR (124 aa)) participates in a nucleoside 3',5'-cyclic phosphate binding.

Its subcellular location is the cytoplasm. It localises to the cytosol. In terms of biological role, essential for male fertility. Plays an important role in spermatogenesis and regulates sperm motility by controlling the development of the flagellar bending of sperm. This Homo sapiens (Human) protein is Cyclic nucleotide-binding domain-containing protein 2 (CNBD2).